Consider the following 246-residue polypeptide: 3-oxoacyl-[acyl-carrier-protein] reductase FabG (246 aa).

Residues 11–14 (GASR), serine 36, 62–63 (DV), and asparagine 89 contribute to the NADP(+) site. Position 141 (serine 141) interacts with substrate. Tyrosine 154 serves as the catalytic Proton acceptor. Residues 154 to 158 (YVAAK) and isoleucine 187 each bind NADP(+).

The protein belongs to the short-chain dehydrogenases/reductases (SDR) family. In terms of assembly, homotetramer.

The catalysed reaction is a (3R)-hydroxyacyl-[ACP] + NADP(+) = a 3-oxoacyl-[ACP] + NADPH + H(+). It participates in lipid metabolism; fatty acid biosynthesis. In terms of biological role, catalyzes the NADPH-dependent reduction of beta-ketoacyl-ACP substrates to beta-hydroxyacyl-ACP products, the first reductive step in the elongation cycle of fatty acid biosynthesis. The protein is 3-oxoacyl-[acyl-carrier-protein] reductase FabG (fabG) of Bacillus subtilis (strain 168).